The primary structure comprises 893 residues: MTSKVVAAAASAFLSRTNELGNLQKSCIRILSFCESNSSRIGLHIHCPVIKFGLLENLDLCNNLLSLYLKTDGIWNARKLFDEMSHRTVFAWTVMISAFTKSQEFASALSLFEEMMASGTHPNEFTFSSVVRSCAGLRDISYGGRVHGSVIKTGFEGNSVVGSSLSDLYSKCGQFKEACELFSSLQNADTISWTMMISSLVGARKWREALQFYSEMVKAGVPPNEFTFVKLLGASSFLGLEFGKTIHSNIIVRGIPLNVVLKTSLVDFYSQFSKMEDAVRVLNSSGEQDVFLWTSVVSGFVRNLRAKEAVGTFLEMRSLGLQPNNFTYSAILSLCSAVRSLDFGKQIHSQTIKVGFEDSTDVGNALVDMYMKCSASEVEASRVFGAMVSPNVVSWTTLILGLVDHGFVQDCFGLLMEMVKREVEPNVVTLSGVLRACSKLRHVRRVLEIHAYLLRRHVDGEMVVGNSLVDAYASSRKVDYAWNVIRSMKRRDNITYTSLVTRFNELGKHEMALSVINYMYGDGIRMDQLSLPGFISASANLGALETGKHLHCYSVKSGFSGAASVLNSLVDMYSKCGSLEDAKKVFEEIATPDVVSWNGLVSGLASNGFISSALSAFEEMRMKETEPDSVTFLILLSACSNGRLTDLGLEYFQVMKKIYNIEPQVEHYVHLVGILGRAGRLEEATGVVETMHLKPNAMIFKTLLRACRYRGNLSLGEDMANKGLALAPSDPALYILLADLYDESGKPELAQKTRNLMTEKRLSKKLGKSTVEVQGKVHSFVSEDVTRVDKTNGIYAEIESIKEEIKRFGSPYRGNENASFHSAKQAVVYGFIYASPEAPVHVVKNKILCKDCHEFVSILTRLVDKKITVRDGNQVHIFKNGECSCKREETSFV.

PPR repeat units follow at residues 57 to 87 (NLDL…MSHR), 88 to 122 (TVFA…GTHP), 123 to 157 (NEFT…GFEG), 158 to 188 (NSVV…LQNA), 189 to 223 (DTIS…GVPP), 224 to 257 (NEFT…GIPL), 258 to 288 (NVVL…SGEQ), 289 to 323 (DVFL…GLQP), 324 to 358 (NNFT…GFED), 359 to 390 (STDV…MVSP), 391 to 425 (NVVS…EVEP), 426 to 460 (NVVT…HVDG), 461 to 491 (EMVV…MKRR), 492 to 526 (DNIT…GIRM), 527 to 561 (DQLS…GFSG), 562 to 592 (AASV…IATP), 593 to 627 (DVVS…ETEP), 628 to 658 (DSVT…MKKI), and 664 to 694 (QVEH…MHLK). Positions 699-774 (IFKTLLRACR…KLGKSTVEVQ (76 aa)) are type E motif. Positions 775-806 (GKVHSFVSEDVTRVDKTNGIYAEIESIKEEIK) are type E(+) motif. The interval 807 to 893 (RFGSPYRGNE…SCKREETSFV (87 aa)) is type DYW motif.

The protein belongs to the PPR family. PCMP-H subfamily.

Its subcellular location is the plastid. It is found in the chloroplast. This is Pentatricopeptide repeat-containing protein At5g52850, chloroplastic (PCMP-H31) from Arabidopsis thaliana (Mouse-ear cress).